The following is a 232-amino-acid chain: MRILAVIPARAGSKRLPGKNTRLLAGKPLIAHTIVAALQSSCCEEIVVSTDSKQIADVAVQYGASVPWLRSEDLATDTSDVIHTVIDLLFKFQQMDVFFDSVLLLQPTSPFRKPETIRHAVEIHKVTGKSVVSVSPISLKPSWCRSIDSQGNLVKPELFQDLEIYCNENPIYKLNGSIYIATAKQIIENKSFYSEPTKPLLLNSISESIDIDTPIDWALTEKLMELNQEALV.

This sequence belongs to the CMP-NeuNAc synthase family.

It catalyses the reaction N,N-diacetyllegionaminate + CTP = CMP-N,N-diacetyllegionaminate + diphosphate. In terms of biological role, involved in biosynthesis of legionaminic acid (5,7-diamino-3,5,7,9-tetradeoxy-D-glycero-D-galacto-non-2-ulosonic acid)(Leg), a sialic acid-like derivative that is incorporated into virulence-associated cell surface glycoconjugates such as lipopolysaccharide (LPS) which could be a key determinant in the ability of L.pneumophila to inhibit the fusion of phagosomes with lysosomes. LPS contains a majority alpha2,4-linked homomer of legionaminic acid. Catalyzes the conversion of N,N'-diacetyllegionaminic acid (Leg5Ac7Ac) and CTP into CMP-N,N'-diacetyllegionaminic acid (CMP-Leg5Ac7Ac). This Legionella pneumophila subsp. pneumophila (strain Philadelphia 1 / ATCC 33152 / DSM 7513) protein is CMP-N,N'-diacetyllegionaminic acid synthase (neuA).